We begin with the raw amino-acid sequence, 249 residues long: Small ribosomal subunit protein uS2 (249 aa).

The protein belongs to the universal ribosomal protein uS2 family.

This chain is Small ribosomal subunit protein uS2, found in Chlorobaculum tepidum (strain ATCC 49652 / DSM 12025 / NBRC 103806 / TLS) (Chlorobium tepidum).